The sequence spans 358 residues: 3'(2'),5'-bisphosphate nucleotidase (358 aa).

Aspartate 52 (proton acceptor) is an active-site residue. 4 residues coordinate Mg(2+): glutamate 78, aspartate 140, isoleucine 142, and aspartate 143. Threonine 145 (proton acceptor) is an active-site residue. Residues threonine 145, histidine 239, serine 263, lysine 266, arginine 280, and aspartate 292 each coordinate adenosine 3',5'-bisphosphate. AMP is bound by residues histidine 239, serine 263, lysine 266, arginine 280, and aspartate 292. Residue aspartate 292 participates in Mg(2+) binding.

It belongs to the inositol monophosphatase superfamily. Mg(2+) serves as cofactor. Is constitutively transcribed in both roots and shoots.

It catalyses the reaction 3'-phosphoadenylyl sulfate + H2O = adenosine 5'-phosphosulfate + phosphate. The enzyme catalyses adenosine 3',5'-bisphosphate + H2O = AMP + phosphate. The catalysed reaction is adenosine 2',5'-bisphosphate + H2O = AMP + phosphate. Inhibited by Ca(2+), Li(+), and Na(+) and activated by K(+). Functionally, phosphatase that converts adenosine 3'-phosphate 5'-phosphosulfate (PAPS) to adenosine 5'-phosphosulfate (APS) and 3'(2')-phosphoadenosine 5'-phosphate (PAP) to AMP. May regulate the flux of sulfur in the sulfur-activation pathway by converting PAPS to APS. Shows no activity on myo-inositol 1-phosphate, beta-glycerol phosphate, NADPH, NADP and 5'-AMP. The polypeptide is 3'(2'),5'-bisphosphate nucleotidase (Oryza sativa (Rice)).